Reading from the N-terminus, the 130-residue chain is 3-aminoacrylate deaminase RutC (130 aa).

This sequence belongs to the RutC family.

The catalysed reaction is (Z)-3-aminoacrylate + H2O + H(+) = 3-oxopropanoate + NH4(+). Involved in pyrimidine catabolism. Catalyzes the deamination of 3-aminoacrylate to malonic semialdehyde, a reaction that can also occur spontaneously. RutC may facilitate the reaction and modulate the metabolic fitness, rather than catalyzing essential functions. The chain is 3-aminoacrylate deaminase RutC from Klebsiella variicola (strain At-22).